Here is a 379-residue protein sequence, read N- to C-terminus: Cytochrome b (379 aa).

Helical transmembrane passes span 33 to 53 (FGSL…FLAM), 77 to 98 (WLIR…YLHI), 113 to 133 (WNIG…GYVL), and 178 to 198 (FFAF…IHFF). Residues histidine 83 and histidine 97 each contribute to the heme b site. Heme b is bound by residues histidine 182 and histidine 196. Histidine 201 serves as a coordination point for a ubiquinone. The next 4 helical transmembrane spans lie at 226 to 246 (IKDI…VLFS), 288 to 308 (LGGV…PMLH), 320 to 340 (FSQC…WIGG), and 347 to 367 (YITI…IVSR).

It belongs to the cytochrome b family. As to quaternary structure, the cytochrome bc1 complex contains 11 subunits: 3 respiratory subunits (MT-CYB, CYC1 and UQCRFS1), 2 core proteins (UQCRC1 and UQCRC2) and 6 low-molecular weight proteins (UQCRH/QCR6, UQCRB/QCR7, UQCRQ/QCR8, UQCR10/QCR9, UQCR11/QCR10 and a cleavage product of UQCRFS1). This cytochrome bc1 complex then forms a dimer. Requires heme b as cofactor.

The protein localises to the mitochondrion inner membrane. Functionally, component of the ubiquinol-cytochrome c reductase complex (complex III or cytochrome b-c1 complex) that is part of the mitochondrial respiratory chain. The b-c1 complex mediates electron transfer from ubiquinol to cytochrome c. Contributes to the generation of a proton gradient across the mitochondrial membrane that is then used for ATP synthesis. The protein is Cytochrome b (MT-CYB) of Dolichotis patagonum (Patagonian mara).